Here is a 33-residue protein sequence, read N- to C-terminus: Sucrose-6-phosphate hydrolase (33 aa).

15–18 (PLQE) lines the substrate pocket. Glutamate 18 is an active-site residue.

Belongs to the glycosyl hydrolase 32 family.

The catalysed reaction is Hydrolysis of terminal non-reducing beta-D-fructofuranoside residues in beta-D-fructofuranosides.. The protein operates within glycan biosynthesis; sucrose metabolism. The chain is Sucrose-6-phosphate hydrolase from Fusobacterium mortiferum.